A 131-amino-acid chain; its full sequence is Large ribosomal subunit protein bL21 (131 aa).

The protein belongs to the bacterial ribosomal protein bL21 family. As to quaternary structure, part of the 50S ribosomal subunit. Contacts protein L20.

Its function is as follows. This protein binds to 23S rRNA in the presence of protein L20. The chain is Large ribosomal subunit protein bL21 from Cereibacter sphaeroides (strain ATCC 17023 / DSM 158 / JCM 6121 / CCUG 31486 / LMG 2827 / NBRC 12203 / NCIMB 8253 / ATH 2.4.1.) (Rhodobacter sphaeroides).